The following is a 318-amino-acid chain: Acetyl-coenzyme A carboxylase carboxyl transferase subunit alpha (318 aa).

One can recognise a CoA carboxyltransferase C-terminal domain in the interval 39–292; that stretch reads LSDKAERQLR…GAAIAETLPG (254 aa).

It belongs to the AccA family. Acetyl-CoA carboxylase is a heterohexamer composed of biotin carboxyl carrier protein (AccB), biotin carboxylase (AccC) and two subunits each of ACCase subunit alpha (AccA) and ACCase subunit beta (AccD).

The protein resides in the cytoplasm. It catalyses the reaction N(6)-carboxybiotinyl-L-lysyl-[protein] + acetyl-CoA = N(6)-biotinyl-L-lysyl-[protein] + malonyl-CoA. It functions in the pathway lipid metabolism; malonyl-CoA biosynthesis; malonyl-CoA from acetyl-CoA: step 1/1. Functionally, component of the acetyl coenzyme A carboxylase (ACC) complex. First, biotin carboxylase catalyzes the carboxylation of biotin on its carrier protein (BCCP) and then the CO(2) group is transferred by the carboxyltransferase to acetyl-CoA to form malonyl-CoA. The chain is Acetyl-coenzyme A carboxylase carboxyl transferase subunit alpha from Acidiphilium cryptum (strain JF-5).